A 278-amino-acid polypeptide reads, in one-letter code: Tryptophan synthase alpha chain (278 aa).

Residues glutamate 50 and aspartate 61 each act as proton acceptor in the active site.

This sequence belongs to the TrpA family. Tetramer of two alpha and two beta chains.

It catalyses the reaction (1S,2R)-1-C-(indol-3-yl)glycerol 3-phosphate + L-serine = D-glyceraldehyde 3-phosphate + L-tryptophan + H2O. The protein operates within amino-acid biosynthesis; L-tryptophan biosynthesis; L-tryptophan from chorismate: step 5/5. The alpha subunit is responsible for the aldol cleavage of indoleglycerol phosphate to indole and glyceraldehyde 3-phosphate. This Rhodopseudomonas palustris (strain HaA2) protein is Tryptophan synthase alpha chain.